Consider the following 510-residue polypeptide: Glycerol kinase (510 aa).

Thr-13 contributes to the ADP binding site. ATP is bound by residues Thr-13 and Thr-14. Thr-13 contributes to the sn-glycerol 3-phosphate binding site. Arg-17 serves as a coordination point for ADP. Sn-glycerol 3-phosphate-binding residues include Arg-83, Glu-84, Tyr-135, and Asp-255. Residues Arg-83, Glu-84, Tyr-135, Asp-255, and Gln-256 each coordinate glycerol. ADP contacts are provided by Thr-277, Gly-321, Gly-421, and Asn-425. ATP-binding residues include Thr-277, Gly-321, and Gly-421.

This sequence belongs to the FGGY kinase family.

The enzyme catalyses glycerol + ATP = sn-glycerol 3-phosphate + ADP + H(+). Its pathway is polyol metabolism; glycerol degradation via glycerol kinase pathway; sn-glycerol 3-phosphate from glycerol: step 1/1. In terms of biological role, key enzyme in the regulation of glycerol uptake and metabolism. Catalyzes the phosphorylation of glycerol to yield sn-glycerol 3-phosphate. The sequence is that of Glycerol kinase from Halobacterium salinarum (strain ATCC 29341 / DSM 671 / R1).